The following is a 276-amino-acid chain: Probable NADH-ubiquinone oxidoreductase 30.4 kDa subunit, mitochondrial (276 aa).

Positions 248 to 276 (EPVGEGKDFTPESFKLPTPQPEPEQEEKK) are disordered.

The protein belongs to the complex I 30 kDa subunit family. In terms of assembly, complex I is composed of about 30 different subunits. This is a component of the iron-sulfur protein fraction.

Its subcellular location is the mitochondrion inner membrane. The catalysed reaction is a ubiquinone + NADH + 5 H(+)(in) = a ubiquinol + NAD(+) + 4 H(+)(out). Functionally, core subunit of the mitochondrial membrane respiratory chain NADH dehydrogenase (Complex I) that is believed to belong to the minimal assembly required for catalysis. Complex I functions in the transfer of electrons from NADH to the respiratory chain. The immediate electron acceptor for the enzyme is believed to be ubiquinone. Essential for N-alkane assimilation. The chain is Probable NADH-ubiquinone oxidoreductase 30.4 kDa subunit, mitochondrial (ALI1) from Candida maltosa (Yeast).